We begin with the raw amino-acid sequence, 430 residues long: Dihydroorotase (430 aa).

Positions 57 and 59 each coordinate Zn(2+). Residues 59–61 (HLR) and Asn91 contribute to the substrate site. Positions 151, 178, and 231 each coordinate Zn(2+). A substrate-binding site is contributed by Asn277. Asp304 is a binding site for Zn(2+). Residue Asp304 is part of the active site. Substrate is bound by residues His308 and 322–323 (PG).

This sequence belongs to the metallo-dependent hydrolases superfamily. DHOase family. Class I DHOase subfamily. It depends on Zn(2+) as a cofactor.

It carries out the reaction (S)-dihydroorotate + H2O = N-carbamoyl-L-aspartate + H(+). Its pathway is pyrimidine metabolism; UMP biosynthesis via de novo pathway; (S)-dihydroorotate from bicarbonate: step 3/3. Its function is as follows. Catalyzes the reversible cyclization of carbamoyl aspartate to dihydroorotate. This is Dihydroorotase from Mycobacterium tuberculosis (strain ATCC 25618 / H37Rv).